We begin with the raw amino-acid sequence, 148 residues long: Large ribosomal subunit protein uL15 (148 aa).

A compositionally biased stretch (basic residues) spans 1-30 (MPSRLRKTRKLRGHVSHGHGRIGKHRKHPG). The tract at residues 1 to 38 (MPSRLRKTRKLRGHVSHGHGRIGKHRKHPGGRGNAGGL) is disordered. His39 is subject to (3S)-3-hydroxyhistidine. N6-acetyllysine occurs at positions 47 and 55. Ser68 is subject to Phosphoserine. At Lys110 the chain carries N6-acetyllysine.

It belongs to the universal ribosomal protein uL15 family. Hydroxylated on His-39 by MINA.

This is Large ribosomal subunit protein uL15 (RPL27A) from Pan troglodytes (Chimpanzee).